Consider the following 331-residue polypeptide: Probable 5-dehydro-4-deoxyglucarate dehydratase 2 (331 aa).

The interval 1 to 23 (MSADTDTDTDTGTGTGPDTDTGT) is disordered. Over residues 10–23 (DTGTGTGPDTDTGT) the composition is skewed to low complexity.

This sequence belongs to the DapA family.

It carries out the reaction 5-dehydro-4-deoxy-D-glucarate + H(+) = 2,5-dioxopentanoate + CO2 + H2O. The protein operates within carbohydrate acid metabolism; D-glucarate degradation; 2,5-dioxopentanoate from D-glucarate: step 2/2. In Streptomyces avermitilis (strain ATCC 31267 / DSM 46492 / JCM 5070 / NBRC 14893 / NCIMB 12804 / NRRL 8165 / MA-4680), this protein is Probable 5-dehydro-4-deoxyglucarate dehydratase 2.